The primary structure comprises 295 residues: Protein PAR32 (295 aa).

The residue at position 2 (Ala2) is an N-acetylalanine. A phosphoserine mark is found at Ser36, Ser39, Ser47, Ser123, Ser138, Ser141, and Ser147. The segment covering Ser134–Ala153 has biased composition (polar residues). Disordered stretches follow at residues Ser134–Val156 and Thr217–Asn295. The segment covering Thr217 to Gly227 has biased composition (basic residues). At Ser246 the chain carries Phosphoserine. Residues Ser246–His256 show a composition bias toward polar residues. Residues Lys265 to Lys274 are compositionally biased toward basic and acidic residues. Residues Glu275 to Ser284 are compositionally biased toward basic residues. Over residues Gly285 to Asn295 the composition is skewed to low complexity.

Hyperphosphorylated after treatment with rapamycin in a TAP42-dependent manner.

It localises to the cytoplasm. In terms of biological role, involved in resistance to cisplatin. This Saccharomyces cerevisiae (strain ATCC 204508 / S288c) (Baker's yeast) protein is Protein PAR32 (PAR32).